A 614-amino-acid chain; its full sequence is Sorting nexin-18 (614 aa).

In terms of domain architecture, SH3 spans methionine 1 to alanine 61. The segment at glycine 85–glutamine 218 is disordered. Over residues proline 90–leucine 101 the composition is skewed to pro residues. Positions serine 141 to aspartate 151 are enriched in acidic residues. The PX domain maps to phenylalanine 266–aspartate 376. Arginine 302, lysine 304, and arginine 342 together coordinate a 1,2-diacyl-sn-glycero-3-phospho-(1D-myo-inositol-4,5-bisphosphate). A BAR domain is found at leucine 411–valine 614.

Belongs to the sorting nexin family. As to quaternary structure, heterodimer with SNX9. Interacts with ITCH. Interacts with dynamin-2 (DNM2), SYNJ1 and WASL. Interacts with the AP-1 complex. Interacts with FCHSD1 (via the F-BAR domain).

The protein resides in the endomembrane system. It localises to the endosome membrane. The protein localises to the recycling endosome membrane. Its subcellular location is the cell membrane. It is found in the cytoplasmic vesicle membrane. Involved in endocytosis and intracellular vesicle trafficking, both during interphase and at the end of mitosis. Required for efficient progress through mitosis and cytokinesis. Required for normal formation of the cleavage furrow at the end of mitosis. Plays a role in endocytosis via clathrin-coated pits, but also clathrin-independent, actin-dependent fluid-phase endocytosis. Plays a role in macropinocytosis. Binds to membranes enriched in phosphatidylinositol 4,5-bisphosphate and promotes membrane tubulation. Stimulates the GTPase activity of DNM2. Promotes DNM2 location at the plasma membrane. Together with DNM2, involved in autophagosome assembly by regulating trafficking from recycling endosomes of phospholipid scramblase ATG9A. This chain is Sorting nexin-18, found in Mus musculus (Mouse).